A 279-amino-acid polypeptide reads, in one-letter code: Undecaprenyl-diphosphatase (279 aa).

The next 8 membrane-spanning stretches (helical) occupy residues 2–22 (LIIELLKAIFFGIIEGITEWL), 44–64 (AFIEMFNIVIQLGAIIAVMLI), 85–105 (WQLWLKVVIACIPSILIAVPL), 113–133 (FYFMVPIAIALIVYGIAFIWI), 163–183 (VLSIVPGTSRSGATILGAIIL), 188–208 (TVAADFTFFLAIPTMFGYSGL), 223–243 (AQVLILLVASLTAFVVSLLAI), and 255–275 (FTIFGKYRIVLGSLLLIYSFF).

Belongs to the UppP family.

It localises to the cell membrane. The catalysed reaction is di-trans,octa-cis-undecaprenyl diphosphate + H2O = di-trans,octa-cis-undecaprenyl phosphate + phosphate + H(+). Catalyzes the dephosphorylation of undecaprenyl diphosphate (UPP). Confers resistance to bacitracin. This Streptococcus pyogenes serotype M5 (strain Manfredo) protein is Undecaprenyl-diphosphatase.